The sequence spans 599 residues: Elongation factor 4 (599 aa).

One can recognise a tr-type G domain in the interval 2–184 (KNIRNFSIIA…RLVRDIPPPQ (183 aa)). Residues 14–19 (DHGKST) and 131–134 (NKID) each bind GTP.

It belongs to the TRAFAC class translation factor GTPase superfamily. Classic translation factor GTPase family. LepA subfamily.

It localises to the cell inner membrane. The catalysed reaction is GTP + H2O = GDP + phosphate + H(+). Its function is as follows. Required for accurate and efficient protein synthesis under certain stress conditions. May act as a fidelity factor of the translation reaction, by catalyzing a one-codon backward translocation of tRNAs on improperly translocated ribosomes. Back-translocation proceeds from a post-translocation (POST) complex to a pre-translocation (PRE) complex, thus giving elongation factor G a second chance to translocate the tRNAs correctly. Binds to ribosomes in a GTP-dependent manner. In Salmonella paratyphi A (strain ATCC 9150 / SARB42), this protein is Elongation factor 4.